The sequence spans 658 residues: Heat shock 70 kDa protein, mitochondrial (658 aa).

The disordered stretch occupies residues 629 to 658; sequence KLDSSASKSSSTENKENKDNTTEAEFTEKK. The span at 631-640 shows a compositional bias: low complexity; that stretch reads DSSASKSSST. Basic and acidic residues predominate over residues 641–658; the sequence is ENKENKDNTTEAEFTEKK.

This sequence belongs to the heat shock protein 70 family.

Its subcellular location is the mitochondrion. Its function is as follows. May function in protein folding and assembly, and disassembly of protein complexes. The sequence is that of Heat shock 70 kDa protein, mitochondrial (mhsp70) from Dictyostelium discoideum (Social amoeba).